Consider the following 234-residue polypeptide: Ribose-5-phosphate isomerase A (234 aa).

Substrate contacts are provided by residues 34–37, 90–93, and 103–106; these read TGST, DGAD, and KGGG. Glutamate 112 serves as the catalytic Proton acceptor. Lysine 130 contributes to the substrate binding site.

Belongs to the ribose 5-phosphate isomerase family. In terms of assembly, homodimer.

It catalyses the reaction aldehydo-D-ribose 5-phosphate = D-ribulose 5-phosphate. Its pathway is carbohydrate degradation; pentose phosphate pathway; D-ribose 5-phosphate from D-ribulose 5-phosphate (non-oxidative stage): step 1/1. In terms of biological role, catalyzes the reversible conversion of ribose-5-phosphate to ribulose 5-phosphate. This is Ribose-5-phosphate isomerase A from Methanosarcina acetivorans (strain ATCC 35395 / DSM 2834 / JCM 12185 / C2A).